Here is a 940-residue protein sequence, read N- to C-terminus: Isoleucine--tRNA ligase (940 aa).

Residues 58-68 carry the 'HIGH' region motif; the sequence is PYANGSIHIGH. L-isoleucyl-5'-AMP is bound at residue Glu-564. Positions 605 to 609 match the 'KMSKS' region motif; that stretch reads KMSKS. Lys-608 serves as a coordination point for ATP. Zn(2+) contacts are provided by Cys-903, Cys-906, Cys-923, and Cys-926.

Belongs to the class-I aminoacyl-tRNA synthetase family. IleS type 1 subfamily. Monomer. The cofactor is Zn(2+).

The protein localises to the cytoplasm. It carries out the reaction tRNA(Ile) + L-isoleucine + ATP = L-isoleucyl-tRNA(Ile) + AMP + diphosphate. Its function is as follows. Catalyzes the attachment of isoleucine to tRNA(Ile). As IleRS can inadvertently accommodate and process structurally similar amino acids such as valine, to avoid such errors it has two additional distinct tRNA(Ile)-dependent editing activities. One activity is designated as 'pretransfer' editing and involves the hydrolysis of activated Val-AMP. The other activity is designated 'posttransfer' editing and involves deacylation of mischarged Val-tRNA(Ile). This Shewanella sediminis (strain HAW-EB3) protein is Isoleucine--tRNA ligase.